The chain runs to 418 residues: UDP-N-acetyl-D-mannosamine dehydrogenase (418 aa).

NAD(+) is bound by residues tyrosine 10, isoleucine 11, aspartate 30, threonine 85, and threonine 119. Arginine 152, valine 153, lysine 204, asparagine 208, arginine 211, histidine 242, arginine 244, threonine 249, and glycine 255 together coordinate UDP-N-acetyl-alpha-D-mannosaminouronate. Catalysis depends on lysine 204, which acts as the Proton donor/acceptor. Residue cysteine 258 is the Nucleophile of the active site. Residue lysine 261 coordinates NAD(+). Residues tyrosine 318 and lysine 319 each coordinate UDP-N-acetyl-alpha-D-mannosaminouronate. Position 326 (arginine 326) interacts with NAD(+). Arginine 398 serves as a coordination point for UDP-N-acetyl-alpha-D-mannosaminouronate.

This sequence belongs to the UDP-glucose/GDP-mannose dehydrogenase family. Homodimer.

The enzyme catalyses UDP-N-acetyl-alpha-D-mannosamine + 2 NAD(+) + H2O = UDP-N-acetyl-alpha-D-mannosaminouronate + 2 NADH + 3 H(+). In terms of biological role, catalyzes the four-electron oxidation of UDP-N-acetyl-D-mannosamine (UDP-ManNAc), reducing NAD(+) and releasing UDP-N-acetylmannosaminuronic acid (UDP-ManNAcA). In Pyrococcus horikoshii (strain ATCC 700860 / DSM 12428 / JCM 9974 / NBRC 100139 / OT-3), this protein is UDP-N-acetyl-D-mannosamine dehydrogenase.